The primary structure comprises 103 residues: Small ribosomal subunit protein uS10 (103 aa).

The protein belongs to the universal ribosomal protein uS10 family. In terms of assembly, part of the 30S ribosomal subunit.

Its function is as follows. Involved in the binding of tRNA to the ribosomes. In Nitratiruptor sp. (strain SB155-2), this protein is Small ribosomal subunit protein uS10.